Reading from the N-terminus, the 120-residue chain is Putative pterin-4-alpha-carbinolamine dehydratase (120 aa).

It belongs to the pterin-4-alpha-carbinolamine dehydratase family.

The enzyme catalyses (4aS,6R)-4a-hydroxy-L-erythro-5,6,7,8-tetrahydrobiopterin = (6R)-L-erythro-6,7-dihydrobiopterin + H2O. This Bdellovibrio bacteriovorus (strain ATCC 15356 / DSM 50701 / NCIMB 9529 / HD100) protein is Putative pterin-4-alpha-carbinolamine dehydratase.